Here is a 156-residue protein sequence, read N- to C-terminus: 6,7-dimethyl-8-ribityllumazine synthase (156 aa).

5-amino-6-(D-ribitylamino)uracil contacts are provided by residues F23, 57-59 (AYE), and 81-83 (AII). 86-87 (GT) contributes to the (2S)-2-hydroxy-3-oxobutyl phosphate binding site. The Proton donor role is filled by H89. F114 serves as a coordination point for 5-amino-6-(D-ribitylamino)uracil. Residue R128 coordinates (2S)-2-hydroxy-3-oxobutyl phosphate.

The protein belongs to the DMRL synthase family.

The enzyme catalyses (2S)-2-hydroxy-3-oxobutyl phosphate + 5-amino-6-(D-ribitylamino)uracil = 6,7-dimethyl-8-(1-D-ribityl)lumazine + phosphate + 2 H2O + H(+). It participates in cofactor biosynthesis; riboflavin biosynthesis; riboflavin from 2-hydroxy-3-oxobutyl phosphate and 5-amino-6-(D-ribitylamino)uracil: step 1/2. In terms of biological role, catalyzes the formation of 6,7-dimethyl-8-ribityllumazine by condensation of 5-amino-6-(D-ribitylamino)uracil with 3,4-dihydroxy-2-butanone 4-phosphate. This is the penultimate step in the biosynthesis of riboflavin. The polypeptide is 6,7-dimethyl-8-ribityllumazine synthase (Helicobacter pylori (strain G27)).